A 175-amino-acid polypeptide reads, in one-letter code: ADP-ribosylation factor 6 (175 aa).

Gly2 carries the N-myristoyl glycine lipid modification. Residue Lys3 is the site of N6-myristoyl lysine attachment. Residues 23–28, 41–44, 63–67, 122–125, and 155–156 each bind GTP; these read AAGKTT, TIPT, DVGGQ, NKQD, and CA.

Belongs to the small GTPase superfamily. Arf family.

The protein localises to the cytoplasm. Its subcellular location is the cytosol. It is found in the cell membrane. It localises to the endosome membrane. The protein resides in the recycling endosome membrane. The protein localises to the cell projection. Its subcellular location is the filopodium membrane. It is found in the ruffle. It localises to the cleavage furrow. The protein resides in the midbody. The protein localises to the midbody ring. Its subcellular location is the golgi apparatus. The enzyme catalyses GTP + H2O = GDP + phosphate + H(+). Its function is as follows. GTP-binding protein involved in protein trafficking; regulates endocytic recycling and cytoskeleton remodeling. May modulate vesicle budding and uncoating within the Golgi apparatus. May contribute to the regulation of dendritic branching, filopodia extension and dendritic spine development. This chain is ADP-ribosylation factor 6 (arf6), found in Xenopus laevis (African clawed frog).